The chain runs to 473 residues: Sulfate adenylyltransferase subunit 1 (473 aa).

The region spanning 19 to 238 (KTLLKFLTCG…IKIKNSISSE (220 aa)) is the tr-type G domain. Residues 28-35 (GSVDDGKS) form a G1 region. 28 to 35 (GSVDDGKS) is a GTP binding site. The interval 86–90 (GITID) is G2. A G3 region spans residues 107-110 (DTPG). GTP is bound by residues 107-111 (DTPGH) and 162-165 (NKMD). Positions 162–165 (NKMD) are G4. The segment at 200 to 202 (SAL) is G5.

It belongs to the TRAFAC class translation factor GTPase superfamily. Classic translation factor GTPase family. CysN/NodQ subfamily. As to quaternary structure, heterodimer composed of CysD, the smaller subunit, and CysN.

The catalysed reaction is sulfate + ATP + H(+) = adenosine 5'-phosphosulfate + diphosphate. It functions in the pathway sulfur metabolism; hydrogen sulfide biosynthesis; sulfite from sulfate: step 1/3. In terms of biological role, with CysD forms the ATP sulfurylase (ATPS) that catalyzes the adenylation of sulfate producing adenosine 5'-phosphosulfate (APS) and diphosphate, the first enzymatic step in sulfur assimilation pathway. APS synthesis involves the formation of a high-energy phosphoric-sulfuric acid anhydride bond driven by GTP hydrolysis by CysN coupled to ATP hydrolysis by CysD. This is Sulfate adenylyltransferase subunit 1 from Buchnera aphidicola subsp. Acyrthosiphon pisum (strain APS) (Acyrthosiphon pisum symbiotic bacterium).